The primary structure comprises 362 residues: UDP-N-acetylglucosamine--N-acetylmuramyl-(pentapeptide) pyrophosphoryl-undecaprenol N-acetylglucosamine transferase (362 aa).

Residues 10 to 12, Asn-124, Arg-161, Ser-195, and Gln-291 each bind UDP-N-acetyl-alpha-D-glucosamine; that span reads TAG.

Belongs to the glycosyltransferase 28 family. MurG subfamily.

Its subcellular location is the cell membrane. The catalysed reaction is di-trans,octa-cis-undecaprenyl diphospho-N-acetyl-alpha-D-muramoyl-L-alanyl-D-glutamyl-meso-2,6-diaminopimeloyl-D-alanyl-D-alanine + UDP-N-acetyl-alpha-D-glucosamine = di-trans,octa-cis-undecaprenyl diphospho-[N-acetyl-alpha-D-glucosaminyl-(1-&gt;4)]-N-acetyl-alpha-D-muramoyl-L-alanyl-D-glutamyl-meso-2,6-diaminopimeloyl-D-alanyl-D-alanine + UDP + H(+). It participates in cell wall biogenesis; peptidoglycan biosynthesis. Functionally, cell wall formation. Catalyzes the transfer of a GlcNAc subunit on undecaprenyl-pyrophosphoryl-MurNAc-pentapeptide (lipid intermediate I) to form undecaprenyl-pyrophosphoryl-MurNAc-(pentapeptide)GlcNAc (lipid intermediate II). The chain is UDP-N-acetylglucosamine--N-acetylmuramyl-(pentapeptide) pyrophosphoryl-undecaprenol N-acetylglucosamine transferase from Streptomyces collinus.